Here is a 343-residue protein sequence, read N- to C-terminus: 3-dehydroquinate synthase (343 aa).

NAD(+) contacts are provided by residues 86 to 90, 110 to 111, lysine 123, and lysine 132; these read GALLD and TT. Zn(2+)-binding residues include glutamate 165, histidine 229, and histidine 243.

Belongs to the sugar phosphate cyclases superfamily. Dehydroquinate synthase family. Co(2+) serves as cofactor. Zn(2+) is required as a cofactor. It depends on NAD(+) as a cofactor.

It localises to the cytoplasm. It carries out the reaction 7-phospho-2-dehydro-3-deoxy-D-arabino-heptonate = 3-dehydroquinate + phosphate. It participates in metabolic intermediate biosynthesis; chorismate biosynthesis; chorismate from D-erythrose 4-phosphate and phosphoenolpyruvate: step 2/7. Catalyzes the conversion of 3-deoxy-D-arabino-heptulosonate 7-phosphate (DAHP) to dehydroquinate (DHQ). This chain is 3-dehydroquinate synthase, found in Pyrobaculum islandicum (strain DSM 4184 / JCM 9189 / GEO3).